A 120-amino-acid polypeptide reads, in one-letter code: Large ribosomal subunit protein uL18 (120 aa).

Belongs to the universal ribosomal protein uL18 family. As to quaternary structure, part of the 50S ribosomal subunit; part of the 5S rRNA/L5/L18/L25 subcomplex. Contacts the 5S and 23S rRNAs.

Functionally, this is one of the proteins that bind and probably mediate the attachment of the 5S RNA into the large ribosomal subunit, where it forms part of the central protuberance. This Brucella abortus (strain S19) protein is Large ribosomal subunit protein uL18.